We begin with the raw amino-acid sequence, 711 residues long: Polyribonucleotide nucleotidyltransferase (711 aa).

Mg(2+) contacts are provided by Asp486 and Asp492. In terms of domain architecture, KH spans 553–612 (PRIHTIKINPDKIKDVIGKGGSVIRALTEETGTTIEIEDDGTVKIAATDGEKAKHAIRRI). One can recognise an S1 motif domain in the interval 622 to 690 (GRVYTGKVTR…RQGRIRLSIK (69 aa)). Residues 689–711 (IKEATEQSQPAAAPEAPAAEQGE) form a disordered region. The segment covering 694 to 711 (EQSQPAAAPEAPAAEQGE) has biased composition (low complexity).

The protein belongs to the polyribonucleotide nucleotidyltransferase family. As to quaternary structure, component of the RNA degradosome, which is a multiprotein complex involved in RNA processing and mRNA degradation. The cofactor is Mg(2+).

It is found in the cytoplasm. The catalysed reaction is RNA(n+1) + phosphate = RNA(n) + a ribonucleoside 5'-diphosphate. Involved in mRNA degradation. Catalyzes the phosphorolysis of single-stranded polyribonucleotides processively in the 3'- to 5'-direction. The protein is Polyribonucleotide nucleotidyltransferase of Escherichia coli (strain ATCC 8739 / DSM 1576 / NBRC 3972 / NCIMB 8545 / WDCM 00012 / Crooks).